The chain runs to 239 residues: Probable transcriptional regulatory protein BCAH187_A0615 (239 aa).

Belongs to the TACO1 family. YeeN subfamily.

The protein localises to the cytoplasm. The chain is Probable transcriptional regulatory protein BCAH187_A0615 from Bacillus cereus (strain AH187).